An 803-amino-acid chain; its full sequence is Lon protease (803 aa).

The Lon N-terminal domain occupies 9–202 (MPVLPLRDVV…YLLGMMESEA (194 aa)). An ATP-binding site is contributed by 356 to 363 (GPPGVGKT). The Lon proteolytic domain maps to 592 to 773 (QNRIGEVTGL…DEVLGFALEN (182 aa)). Active-site residues include Ser679 and Lys722.

It belongs to the peptidase S16 family. Homohexamer. Organized in a ring with a central cavity.

Its subcellular location is the cytoplasm. It catalyses the reaction Hydrolysis of proteins in presence of ATP.. Functionally, ATP-dependent serine protease that mediates the selective degradation of mutant and abnormal proteins as well as certain short-lived regulatory proteins. Required for cellular homeostasis and for survival from DNA damage and developmental changes induced by stress. Degrades polypeptides processively to yield small peptide fragments that are 5 to 10 amino acids long. Binds to DNA in a double-stranded, site-specific manner. This is Lon protease from Haemophilus influenzae (strain ATCC 51907 / DSM 11121 / KW20 / Rd).